We begin with the raw amino-acid sequence, 177 residues long: UPF0178 protein TP_0845 (177 aa).

The tract at residues 155-177 is disordered; it reads EAKTGEEQCDWPSAQGKSQTGRR.

It belongs to the UPF0178 family.

This Treponema pallidum (strain Nichols) protein is UPF0178 protein TP_0845.